A 96-amino-acid chain; its full sequence is UPF0235 protein ECA3630 (96 aa).

This sequence belongs to the UPF0235 family.

In Pectobacterium atrosepticum (strain SCRI 1043 / ATCC BAA-672) (Erwinia carotovora subsp. atroseptica), this protein is UPF0235 protein ECA3630.